Here is a 450-residue protein sequence, read N- to C-terminus: MKKGLVVDLSKAAPYLKSHEVAYMQETINQAHNKLHNGTGAGNDFLGWVDLPVNYDKDEFARIKEAAKKIQSDSDVLVVIGIGGSYLGARAAIEMLTNNFYNSMSKDKRKTPAIFYAGNNISSSYMADLLKAIDGLDVSLNVISKSGTTTEPAIAFRILKDYMEKKYGKEEAKKRIYATTDAKKGALKTLADAEGYETFVIPDDVGGRFSVLTAVGLLPIAAAGINIDEMMEGAADAREEYANPSLADNECYKYAAARNALYNKGKAIEILVNYEPSVHYFNEWWKQLYGESEGKDNKGLFPAAVDFSTDLHSMGQYIQEGRRDIFETVINVGSPREEIVIEVNDENIDGLNFLAGKTMDYVNKQAFRGTLLAHNDGEVPNLVVNVPELTPYYFGRLVYFFEKACGISGYVLGINPFDQPGVEAYKKNMFALLGKPGFEDLKAELEERLK.

The Proton donor role is filled by glutamate 291. Catalysis depends on residues histidine 312 and lysine 426.

Belongs to the GPI family.

It localises to the cytoplasm. The catalysed reaction is alpha-D-glucose 6-phosphate = beta-D-fructose 6-phosphate. The protein operates within carbohydrate biosynthesis; gluconeogenesis. It functions in the pathway carbohydrate degradation; glycolysis; D-glyceraldehyde 3-phosphate and glycerone phosphate from D-glucose: step 2/4. In terms of biological role, catalyzes the reversible isomerization of glucose-6-phosphate to fructose-6-phosphate. This Clostridium perfringens (strain SM101 / Type A) protein is Glucose-6-phosphate isomerase.